The following is a 1329-amino-acid chain: Synergin gamma (1329 aa).

Residues 112-152 (MQKQFAEEQQKRFEQQQKLLEEERKRRQFEEQKQKLRLLSS) adopt a coiled-coil conformation. A disordered region spans residues 175 to 211 (GFSRDAKMHPTPASHPKKPDCPTSSHSTKTVSPSSAF). The span at 197–209 (TSSHSTKTVSPSS) shows a compositional bias: low complexity. The 112-residue stretch at 393–504 (NESLVPDAYK…TPVSQPTAMT (112 aa)) folds into the EH domain. The DFXDF motif 1 motif lies at 555-559 (DFQDF). The residue at position 571 (Ser571) is a Phosphoserine. Residues 578 to 594 (VPASSKTSNSQHGNSAP) are compositionally biased toward polar residues. The segment at 578–600 (VPASSKTSNSQHGNSAPSLLIPL) is disordered. The residue at position 609 (Lys609) is an N6-acetyllysine. An interaction with AP1G1 region spans residues 614-878 (KGISAEKPSE…ADFHSSKFSS (265 aa)). Disordered regions lie at residues 661–701 (GTDD…TQTQ) and 730–753 (AFST…PASL). Ser676 is modified (phosphoserine). The segment at 761-773 (LADDFGEFNLFGE) is interaction with AP1G1, AP1G2 and GGA1. The DFXDF motif 2 signature appears at 785–789 (DFADF). The tract at residues 797–835 (IPSEPKADDKYEALREEGSPGALSTSTVEGAHNPPVSSS) is disordered. Residues 801-814 (PKADDKYEALREEG) are compositionally biased toward basic and acidic residues. Position 815 is a phosphoserine (Ser815). Lys836 carries the post-translational modification N6-acetyllysine. A phosphoserine mark is found at Ser844 and Ser864. 3 disordered regions span residues 856-922 (KENT…DSED), 941-1042 (HVMS…FGEF), and 1088-1113 (SLSL…RDRS). Basic and acidic residues predominate over residues 864–873 (SDGDFADFHS). The DFXDF motif 3 motif lies at 867–871 (DFADF). Low complexity predominate over residues 874-883 (SKFSSTSSDK). Phosphoserine is present on residues Ser904, Ser944, Ser947, Ser997, Ser1021, Ser1088, Ser1090, Ser1102, and Ser1113. Residues 944–955 (SDSSLDLPTVSG) show a composition bias toward polar residues. Residues 1016-1028 (ENTCPSPASSVAS) show a composition bias toward polar residues. Position 1115 is a phosphothreonine (Thr1115).

As to quaternary structure, self-associates. Interacts with GGA1 (via GAE domain). Interacts with GGA2 and GGA3. Interacts with AP1G1 (via GAE domain), a subunit of adapter protein complex AP-1. Interacts with AP1G2 (via GAE domain) a subunit of adapter protein complex AP-1. Component of the aftiphilin/p200/gamma-synergin complex, at least composed of AFTPH/aftiphilin, HEATR5B/p200a and SYNRG/gamma-synergin, which plays a role in the AP1G1/AP-1-mediated trafficking of transferrin from early to recycling endosomes. Within the complex interacts with AFTPH/aftiphilin and HEATR5B/p200a; the interactions are direct. Interacts (via EH domain) with SCAMP1. In terms of tissue distribution, detected in brain and liver (at protein level). Ubiquitously expressed.

It localises to the cytoplasm. The protein resides in the golgi apparatus. Its subcellular location is the trans-Golgi network membrane. The protein localises to the perinuclear region. It is found in the cytoplasmic vesicle. It localises to the clathrin-coated vesicle. Plays a role in endocytosis and/or membrane trafficking at the trans-Golgi network (TGN). May act by linking the adapter protein complex AP-1 to other proteins. Component of clathrin-coated vesicles. Component of the aftiphilin/p200/gamma-synergin complex, which plays roles in AP1G1/AP-1-mediated protein trafficking including the trafficking of transferrin from early to recycling endosomes, and the membrane trafficking of furin and the lysosomal enzyme cathepsin D between the trans-Golgi network (TGN) and endosomes. This Rattus norvegicus (Rat) protein is Synergin gamma (Synrg).